A 401-amino-acid polypeptide reads, in one-letter code: L-rhamnonate dehydratase (401 aa).

Substrate contacts are provided by histidine 29 and arginine 55. Aspartate 222, glutamate 248, and glutamate 276 together coordinate Mg(2+). Residue histidine 325 is the Proton acceptor of the active site. A substrate-binding site is contributed by glutamate 345.

It belongs to the mandelate racemase/muconate lactonizing enzyme family. RhamD subfamily. Homooctamer; tetramer of dimers. It depends on Mg(2+) as a cofactor.

It catalyses the reaction L-rhamnonate = 2-dehydro-3-deoxy-L-rhamnonate + H2O. In terms of biological role, catalyzes the dehydration of L-rhamnonate to 2-keto-3-deoxy-L-rhamnonate (KDR). In Tolumonas auensis (strain DSM 9187 / NBRC 110442 / TA 4), this protein is L-rhamnonate dehydratase.